Here is a 389-residue protein sequence, read N- to C-terminus: Gustatory receptor 68a (389 aa).

Residues 1-42 (MKIYQDIYPISKPSQIFAILPFYSGDVDDGFRFGGLGRWYGR) lie on the Cytoplasmic side of the membrane. A helical membrane pass occupies residues 43 to 63 (LVALIILIGSLTLGEDVLFAS). Residues 64–82 (KEYRLVASAQGDTEEINRT) are Extracellular-facing. N80 is a glycosylation site (N-linked (GlcNAc...) asparagine). Residues 83 to 103 (IETLLCIISYTMVVLSSVQNA) form a helical membrane-spanning segment. The Cytoplasmic portion of the chain corresponds to 104 to 133 (SRHFRTLHDIAKIDEYLLANGFRETYSCRN). Residues 134–154 (LTILVTSAAGGVLAVAFYYIH) traverse the membrane as a helical segment. Over 155 to 164 (YRSGIGAKRQ) the chain is Extracellular. The helical transmembrane segment at 165–185 (IILLLIYFLQLLYSTLLALYL) threads the bilayer. At 186–236 (RTLMMNLAQRIGFLNQKLDTFNLQDCGHMENWRELSNLIEVLCKFRYITEN) the chain is on the cytoplasmic side. The chain crosses the membrane as a helical span at residues 237–257 (INCVAGVSLLFYFGFSFYTVT). A glycan (N-linked (GlcNAc...) asparagine) is linked at N258. The Extracellular portion of the chain corresponds to 258–281 (NQSYLAFATLTAGSLSSKTEVADT). Residues 282–302 (IGLSCIWVLAETITMIVICSA) form a helical membrane-spanning segment. At 303-352 (CDGLASEVNGTAQILARIYGKSKQFQNLIDKFLTKSIKQDLQFTAYGFFS) the chain is on the cytoplasmic side. A helical transmembrane segment spans residues 353–373 (IDNSTLFKIFSAVTTYLVILI). The Extracellular segment spans residues 374–389 (QFKQLEDSKVEDISQA).

It belongs to the insect chemoreceptor superfamily. Gustatory receptor (GR) family. Gr21a subfamily. In terms of tissue distribution, expressed in chemosensory neurons of about 20 male-specific gustatory bristles in the forelegs. No expression is seen in the mechanosensory neurons. In larvae, expressed in the ventral pharyngeal sense organ.

The protein resides in the cell membrane. In terms of biological role, dsx-dependent essential component of pheromone-driven courtship behavior. Recognizes a female pheromone involved in the second step (tapping step) of the courtship display which is essential for efficient execution of the entire courtship sequence and timely mating. Required for detection of the male sex pheromone CH503 which is transferred from males to females during mating and inhibits courtship behavior by other males. Gr68a-expressing neurons in the male foreleg relay signals to the suboesophageal zone (SEZ) and courtship suppression is mediated by the release of the neuropeptide tachykinin from a cluster of 8-10 neurons in the SEZ. The protein is Gustatory receptor 68a (Gr68a) of Drosophila melanogaster (Fruit fly).